Here is a 156-residue protein sequence, read N- to C-terminus: Transcriptional repressor NrdR (156 aa).

A zinc finger lies at 3 to 34 (CPKCNSTQSKVVDSRHADELNAIRRRRECENC). In terms of domain architecture, ATP-cone spans 49–139 (LIVVKKDGTR…VYKEFKDVDQ (91 aa)).

Belongs to the NrdR family. It depends on Zn(2+) as a cofactor.

Functionally, negatively regulates transcription of bacterial ribonucleotide reductase nrd genes and operons by binding to NrdR-boxes. This Staphylococcus aureus (strain NCTC 8325 / PS 47) protein is Transcriptional repressor NrdR.